Here is a 166-residue protein sequence, read N- to C-terminus: Phosphopantetheine adenylyltransferase (166 aa).

Substrate is bound at residue Thr11. ATP is bound by residues 11-12 and His19; that span reads TF. The substrate site is built by Lys43, Thr79, and Arg93. ATP-binding positions include Glu104 and 128–134; that span reads LEPLNST.

The protein belongs to the bacterial CoaD family. In terms of assembly, homohexamer. Mg(2+) serves as cofactor.

It localises to the cytoplasm. It catalyses the reaction (R)-4'-phosphopantetheine + ATP + H(+) = 3'-dephospho-CoA + diphosphate. It participates in cofactor biosynthesis; coenzyme A biosynthesis; CoA from (R)-pantothenate: step 4/5. Its function is as follows. Reversibly transfers an adenylyl group from ATP to 4'-phosphopantetheine, yielding dephospho-CoA (dPCoA) and pyrophosphate. This chain is Phosphopantetheine adenylyltransferase, found in Lactococcus lactis subsp. cremoris (strain MG1363).